A 340-amino-acid polypeptide reads, in one-letter code: DNA-directed RNA polymerase subunit alpha (340 aa).

The alpha N-terminal domain (alpha-NTD) stretch occupies residues M1–D233. The interval V251–E340 is alpha C-terminal domain (alpha-CTD).

Belongs to the RNA polymerase alpha chain family. Homodimer. The RNAP catalytic core consists of 2 alpha, 1 beta, 1 beta' and 1 omega subunit. When a sigma factor is associated with the core the holoenzyme is formed, which can initiate transcription.

The enzyme catalyses RNA(n) + a ribonucleoside 5'-triphosphate = RNA(n+1) + diphosphate. In terms of biological role, DNA-dependent RNA polymerase catalyzes the transcription of DNA into RNA using the four ribonucleoside triphosphates as substrates. The sequence is that of DNA-directed RNA polymerase subunit alpha from Geobacter metallireducens (strain ATCC 53774 / DSM 7210 / GS-15).